Reading from the N-terminus, the 170-residue chain is Adenine phosphoribosyltransferase (170 aa).

The protein belongs to the purine/pyrimidine phosphoribosyltransferase family. In terms of assembly, homodimer.

Its subcellular location is the cytoplasm. It catalyses the reaction AMP + diphosphate = 5-phospho-alpha-D-ribose 1-diphosphate + adenine. It functions in the pathway purine metabolism; AMP biosynthesis via salvage pathway; AMP from adenine: step 1/1. In terms of biological role, catalyzes a salvage reaction resulting in the formation of AMP, that is energically less costly than de novo synthesis. The polypeptide is Adenine phosphoribosyltransferase (Kosmotoga olearia (strain ATCC BAA-1733 / DSM 21960 / TBF 19.5.1)).